Reading from the N-terminus, the 160-residue chain is Sperm acrosome-associated protein 5 (160 aa).

An N-terminal signal peptide occupies residues methionine 1 to alanine 21. In terms of domain architecture, C-type lysozyme spans lysine 22 to arginine 150. 4 disulfides stabilise this stretch: cysteine 27/cysteine 147, cysteine 51/cysteine 135, cysteine 85/cysteine 100, and cysteine 96/cysteine 114. Residue glutamate 56 is part of the active site.

The protein belongs to the glycosyl hydrolase 22 family.

The protein localises to the secreted. It carries out the reaction Hydrolysis of (1-&gt;4)-beta-linkages between N-acetylmuramic acid and N-acetyl-D-glucosamine residues in a peptidoglycan and between N-acetyl-D-glucosamine residues in chitodextrins.. The sequence is that of Sperm acrosome-associated protein 5 (Spaca5) from Mus musculus (Mouse).